Reading from the N-terminus, the 103-residue chain is MDIQTRKSILWDAFEELKTRWGADEKFLERVEEEELTVDGLPESKVRDLIELREKYQLDELEFLFIVGTAVGLYQGQKQVKEILQRRMSALNEFVSSLVGREL.

This is an uncharacterized protein from Archaeoglobus fulgidus (strain ATCC 49558 / DSM 4304 / JCM 9628 / NBRC 100126 / VC-16).